The following is a 93-amino-acid chain: UPF0297 protein PEPE_1262 (93 aa).

The protein belongs to the UPF0297 family.

In Pediococcus pentosaceus (strain ATCC 25745 / CCUG 21536 / LMG 10740 / 183-1w), this protein is UPF0297 protein PEPE_1262.